A 70-amino-acid polypeptide reads, in one-letter code: Adenylate kinase (70 aa).

10–15 (GAGKGT) is an ATP binding site. The NMP stretch occupies residues 30-59 (STGDLFRANISKQTELGKLAKSYMDKGELV). AMP-binding positions include Thr-31, Arg-36, and 57–59 (ELV).

Belongs to the adenylate kinase family. Monomer.

It localises to the cytoplasm. It catalyses the reaction AMP + ATP = 2 ADP. The protein operates within purine metabolism; AMP biosynthesis via salvage pathway; AMP from ADP: step 1/1. Its function is as follows. Catalyzes the reversible transfer of the terminal phosphate group between ATP and AMP. Plays an important role in cellular energy homeostasis and in adenine nucleotide metabolism. The sequence is that of Adenylate kinase (adk) from Streptomyces scabiei.